A 158-amino-acid chain; its full sequence is 2-C-methyl-D-erythritol 2,4-cyclodiphosphate synthase (158 aa).

A divalent metal cation contacts are provided by Asp-9 and His-11. 4-CDP-2-C-methyl-D-erythritol 2-phosphate contacts are provided by residues 9–11 (DVH) and 35–36 (HS). His-43 contacts a divalent metal cation. 4-CDP-2-C-methyl-D-erythritol 2-phosphate contacts are provided by residues 57 to 59 (DIG), 62 to 66 (FPDTD), 133 to 136 (TTSE), Phe-140, and Arg-143.

This sequence belongs to the IspF family. In terms of assembly, homotrimer. The cofactor is a divalent metal cation.

The catalysed reaction is 4-CDP-2-C-methyl-D-erythritol 2-phosphate = 2-C-methyl-D-erythritol 2,4-cyclic diphosphate + CMP. It participates in isoprenoid biosynthesis; isopentenyl diphosphate biosynthesis via DXP pathway; isopentenyl diphosphate from 1-deoxy-D-xylulose 5-phosphate: step 4/6. Involved in the biosynthesis of isopentenyl diphosphate (IPP) and dimethylallyl diphosphate (DMAPP), two major building blocks of isoprenoid compounds. Catalyzes the conversion of 4-diphosphocytidyl-2-C-methyl-D-erythritol 2-phosphate (CDP-ME2P) to 2-C-methyl-D-erythritol 2,4-cyclodiphosphate (ME-CPP) with a corresponding release of cytidine 5-monophosphate (CMP). The polypeptide is 2-C-methyl-D-erythritol 2,4-cyclodiphosphate synthase (Pasteurella multocida (strain Pm70)).